An 886-amino-acid chain; its full sequence is Interference hedgehog (886 aa).

The signal sequence occupies residues 1 to 20; sequence MTLLTSSLLLFSLLTSRLEA. Residues 21–709 lie on the Extracellular side of the membrane; that stretch reads IPVLEKSPAH…ETFNMSPMLT (689 aa). A compositionally biased stretch (low complexity) spans 29 to 38; it reads AHPAHSAHPA. Residues 29–52 are disordered; that stretch reads AHPAHSAHPAHPAHPAHPAHPSPG. 4 consecutive Ig-like C2-type domains span residues 51-148, 138-238, 258-346, and 352-438; these read PGVR…IARL, PLVV…ERIQ, PHLL…YIKV, and PQIV…LQVN. Disulfide bonds link C74–C132, C179–C226, C282–C330, and C373–C420. Residues N108 and N215 are each glycosylated (N-linked (GlcNAc...) asparagine). Positions 432–475 are disordered; the sequence is GTLLQVNPKQIQEPRESGGTHRPKPNQGSRQKQMYPPTPPNVTR. 2 Fibronectin type-III domains span residues 467–573 and 581–676; these read PPTP…LQPG and VPEL…TQRP. The N-linked (GlcNAc...) asparagine glycan is linked to N472. 4 residues coordinate heparin: R503, K507, K509, and R547. A glycan (N-linked (GlcNAc...) asparagine) is linked at N563. Residues 668–697 are disordered; the sequence is LKQGRTQRPKTSTTEEPTLQMGDRDTTTPS. Positions 671–684 are enriched in polar residues; that stretch reads GRTQRPKTSTTEEP. A glycan (N-linked (GlcNAc...) asparagine) is linked at N699. A helical transmembrane segment spans residues 710–730; that stretch reads GTIGGGAVLILLLISTCFCVC. The Cytoplasmic portion of the chain corresponds to 731–886; sequence RRRNSRSRGN…SSGSLNSVGV (156 aa). 2 disordered regions span residues 734–768 and 781–886; these read NSRS…QRQR and QQQQ…SVGV. 2 stretches are compositionally biased toward low complexity: residues 829 to 843 and 870 to 886; these read RAGG…NNNN and SSRS…SVGV.

Belongs to the immunoglobulin superfamily. IHOG family. In terms of assembly, homodimer. Heterotetramer; 2 iHog chains bind 2 hh chains when facilitated by heparin, heparin is required to promote high-affinity interactions between hh and iHog.

The protein resides in the membrane. Functionally, mediates response to the active Hedgehog (Hh) protein signal in embryos, functioning upstream or at the level of patched (ptc). This Drosophila melanogaster (Fruit fly) protein is Interference hedgehog (ihog).